A 427-amino-acid chain; its full sequence is GTPase ERA-like, chloroplastic (427 aa).

A chloroplast-targeting transit peptide spans 1–39 (MAVSPHISPTLSRYKFFSTSVVENPNFSPYRIYSRRRVT). The 171-residue stretch at 128-298 (RSGYVAVVGM…KEWILSKLPF (171 aa)) folds into the Era-type G domain. The interval 136–143 (GMPNVGKS) is G1. 136 to 143 (GMPNVGKS) provides a ligand contact to GTP. Positions 162-166 (QTTRH) are G2. A G3 region spans residues 183 to 186 (DTPG). GTP contacts are provided by residues 183–187 (DTPGV) and 248–251 (NKKD). The G4 stretch occupies residues 248–251 (NKKD). Residues 277 to 279 (VSA) are G5. Residues 329 to 406 (YRNEVPYACQ…FLEVEVKVKE (78 aa)) enclose the KH type-2 domain.

The protein belongs to the TRAFAC class TrmE-Era-EngA-EngB-Septin-like GTPase superfamily. Era GTPase family.

Its subcellular location is the plastid. The protein resides in the chloroplast stroma. It is found in the chloroplast nucleoid. Its function is as follows. Nuclear genome-encoded probable GTPase involved in ribosome biogenesis in chloroplasts. Plays a role in 16S rRNA maturation in plastids and may contribute to the assembly of the small (30S) ribosomal subunit. In Arabidopsis thaliana (Mouse-ear cress), this protein is GTPase ERA-like, chloroplastic.